Consider the following 398-residue polypeptide: Acetylornithine aminotransferase (398 aa).

Pyridoxal 5'-phosphate is bound by residues 105–106 (GA) and F138. A N(2)-acetyl-L-ornithine-binding site is contributed by R141. 223–226 (DEVQ) is a binding site for pyridoxal 5'-phosphate. K252 is modified (N6-(pyridoxal phosphate)lysine). Position 280 (T280) interacts with N(2)-acetyl-L-ornithine. T281 provides a ligand contact to pyridoxal 5'-phosphate.

This sequence belongs to the class-III pyridoxal-phosphate-dependent aminotransferase family. ArgD subfamily. As to quaternary structure, homodimer. Requires pyridoxal 5'-phosphate as cofactor.

It localises to the cytoplasm. It catalyses the reaction N(2)-acetyl-L-ornithine + 2-oxoglutarate = N-acetyl-L-glutamate 5-semialdehyde + L-glutamate. It functions in the pathway amino-acid biosynthesis; L-arginine biosynthesis; N(2)-acetyl-L-ornithine from L-glutamate: step 4/4. This is Acetylornithine aminotransferase from Methanocaldococcus jannaschii (strain ATCC 43067 / DSM 2661 / JAL-1 / JCM 10045 / NBRC 100440) (Methanococcus jannaschii).